The following is a 121-amino-acid chain: Ragulator complex protein LAMTOR4 homolog (121 aa).

The tract at residues 91-121 (TQNGATTSSSSSTSYNDAAEGNNISSSTVLA) is disordered. Residues 112–121 (NNISSSTVLA) are compositionally biased toward polar residues.

Belongs to the LAMTOR4 family. In terms of assembly, part of the Ragulator complex.

It is found in the lysosome. Its function is as follows. Regulator of the TOR pathway, a signaling cascade that promotes cell growth in response to growth factors, energy levels, and amino acids. As part of the Ragulator complex, may activate the TOR signaling cascade in response to amino acids. In Drosophila pseudoobscura pseudoobscura (Fruit fly), this protein is Ragulator complex protein LAMTOR4 homolog.